A 470-amino-acid polypeptide reads, in one-letter code: Glutathione reductase (470 aa).

Ser16 and Gly17 together coordinate FAD. Ser16 lines the glutathione pocket. Position 23 (Arg23) interacts with glutathione. FAD is bound by residues Glu36, Thr43, Cys44, and Lys52. Cys44 and Cys49 are joined by a disulfide. Residue Tyr104 coordinates glutathione. Position 120 (Ala120) interacts with FAD. Residues Gly190, Ile193, Glu196, Arg213, and Arg219 each contribute to the NADP(+) site. Thr228 provides a ligand contact to glutathione. Gly280 is an NADP(+) binding site. Asp321 is an FAD binding site. Glu327 is an NADP(+) binding site. Position 329 (Thr329) interacts with FAD. Residue Arg337 coordinates glutathione. Position 362 (Ala362) interacts with NADP(+). A glutathione-binding site is contributed by Lys412. His459 is a binding site for FAD. The active-site Proton acceptor is His459.

The protein belongs to the class-I pyridine nucleotide-disulfide oxidoreductase family. In terms of assembly, homodimer. FAD is required as a cofactor.

The protein resides in the cytoplasm. Its subcellular location is the mitochondrion. The enzyme catalyses 2 glutathione + NADP(+) = glutathione disulfide + NADPH + H(+). Catalyzes the reduction of glutathione disulfide (GSSG) to reduced glutathione (GSH). Constitutes the major mechanism to maintain a high GSH:GSSG ratio in the cytosol. The polypeptide is Glutathione reductase (GLR1) (Yarrowia lipolytica (strain CLIB 122 / E 150) (Yeast)).